The following is a 589-amino-acid chain: Serine/threonine-protein kinase shk2 (589 aa).

Positions 23 to 125 (GIIRSGWVML…WMDLISSRAL (103 aa)) constitute a PH domain. Positions 129–142 (VSSPMNPKHQVHVG) constitute a CRIB domain. In terms of domain architecture, Protein kinase spans 309–566 (FNVKHKLGQG…AAELLTHSFL (258 aa)). ATP is bound by residues 315 to 323 (LGQGASGSV) and lysine 343. Catalysis depends on aspartate 434, which acts as the Proton acceptor.

This sequence belongs to the protein kinase superfamily. STE Ser/Thr protein kinase family. STE20 subfamily.

It carries out the reaction L-seryl-[protein] + ATP = O-phospho-L-seryl-[protein] + ADP + H(+). The enzyme catalyses L-threonyl-[protein] + ATP = O-phospho-L-threonyl-[protein] + ADP + H(+). Its function is as follows. Forms an activated complex with GTP-bound Ras-like cdc42. Participates in Ras-dependent morphological control and mating response pathways. This chain is Serine/threonine-protein kinase shk2 (shk2), found in Schizosaccharomyces pombe (strain 972 / ATCC 24843) (Fission yeast).